The following is a 227-amino-acid chain: Cytochrome c oxidase subunit 2 (227 aa).

Residues methionine 1–serine 14 lie on the Mitochondrial intermembrane side of the membrane. A helical membrane pass occupies residues proline 15 to methionine 45. Residues leucine 46–glutamine 59 are Mitochondrial matrix-facing. The helical transmembrane segment at glutamate 60–methionine 87 threads the bilayer. Topologically, residues aspartate 88–leucine 227 are mitochondrial intermembrane. Histidine 161, cysteine 196, glutamate 198, cysteine 200, histidine 204, and methionine 207 together coordinate Cu cation. Residue glutamate 198 coordinates Mg(2+).

The protein belongs to the cytochrome c oxidase subunit 2 family. As to quaternary structure, component of the cytochrome c oxidase (complex IV, CIV), a multisubunit enzyme composed of 14 subunits. The complex is composed of a catalytic core of 3 subunits MT-CO1, MT-CO2 and MT-CO3, encoded in the mitochondrial DNA, and 11 supernumerary subunits COX4I, COX5A, COX5B, COX6A, COX6B, COX6C, COX7A, COX7B, COX7C, COX8 and NDUFA4, which are encoded in the nuclear genome. The complex exists as a monomer or a dimer and forms supercomplexes (SCs) in the inner mitochondrial membrane with NADH-ubiquinone oxidoreductase (complex I, CI) and ubiquinol-cytochrome c oxidoreductase (cytochrome b-c1 complex, complex III, CIII), resulting in different assemblies (supercomplex SCI(1)III(2)IV(1) and megacomplex MCI(2)III(2)IV(2)). Found in a complex with TMEM177, COA6, COX18, COX20, SCO1 and SCO2. Interacts with TMEM177 in a COX20-dependent manner. Interacts with COX20. Interacts with COX16. Requires Cu cation as cofactor.

The protein resides in the mitochondrion inner membrane. It carries out the reaction 4 Fe(II)-[cytochrome c] + O2 + 8 H(+)(in) = 4 Fe(III)-[cytochrome c] + 2 H2O + 4 H(+)(out). Its function is as follows. Component of the cytochrome c oxidase, the last enzyme in the mitochondrial electron transport chain which drives oxidative phosphorylation. The respiratory chain contains 3 multisubunit complexes succinate dehydrogenase (complex II, CII), ubiquinol-cytochrome c oxidoreductase (cytochrome b-c1 complex, complex III, CIII) and cytochrome c oxidase (complex IV, CIV), that cooperate to transfer electrons derived from NADH and succinate to molecular oxygen, creating an electrochemical gradient over the inner membrane that drives transmembrane transport and the ATP synthase. Cytochrome c oxidase is the component of the respiratory chain that catalyzes the reduction of oxygen to water. Electrons originating from reduced cytochrome c in the intermembrane space (IMS) are transferred via the dinuclear copper A center (CU(A)) of subunit 2 and heme A of subunit 1 to the active site in subunit 1, a binuclear center (BNC) formed by heme A3 and copper B (CU(B)). The BNC reduces molecular oxygen to 2 water molecules using 4 electrons from cytochrome c in the IMS and 4 protons from the mitochondrial matrix. The chain is Cytochrome c oxidase subunit 2 (MT-CO2) from Halichoerus grypus (Gray seal).